A 134-amino-acid polypeptide reads, in one-letter code: ATP synthase epsilon chain, plastid (134 aa).

It belongs to the ATPase epsilon chain family. F-type ATPases have 2 components, CF(1) - the catalytic core - and CF(0) - the membrane proton channel. CF(1) has five subunits: alpha(3), beta(3), gamma(1), delta(1), epsilon(1). CF(0) has three main subunits: a, b and c.

The protein resides in the plastid membrane. Produces ATP from ADP in the presence of a proton gradient across the membrane. This Prototheca wickerhamii protein is ATP synthase epsilon chain, plastid.